Consider the following 383-residue polypeptide: Protein RecA (383 aa).

79–86 (GPESSGKT) contacts ATP. A disordered region spans residues 347-369 (IEEDNTEEKQSSKEKETDEKADK). Residues 353 to 369 (EEKQSSKEKETDEKADK) are compositionally biased toward basic and acidic residues.

It belongs to the RecA family.

The protein localises to the cytoplasm. Can catalyze the hydrolysis of ATP in the presence of single-stranded DNA, the ATP-dependent uptake of single-stranded DNA by duplex DNA, and the ATP-dependent hybridization of homologous single-stranded DNAs. It interacts with LexA causing its activation and leading to its autocatalytic cleavage. This chain is Protein RecA, found in Streptococcus mutans serotype c (strain ATCC 700610 / UA159).